We begin with the raw amino-acid sequence, 1706 residues long: 5'-3' exoribonuclease 1 (1706 aa).

Phosphoserine is present on Ser1348. The disordered stretch occupies residues 1619-1706; it reads ENKEAQSSQA…VNFGVSKPSE (88 aa). Over residues 1623-1642 the composition is skewed to polar residues; it reads AQSSQATPVQTSQPDSSNIV. Phosphoserine is present on Ser1645. A compositionally biased stretch (low complexity) spans 1647-1657; that stretch reads RESSSASLKSS. Residues 1658–1676 show a composition bias toward polar residues; that stretch reads PIAQPASSFQVETASQGHS. Basic residues predominate over residues 1677–1694; it reads ISHHKSTPISSSRRKSRK.

Belongs to the 5'-3' exonuclease family. Found in a mRNP complex with UPF1, UPF2, UPF3B and XRN1. Associates with alpha and beta tubulins. Interacts with DIS3L2. Interacts with ZC3HAV1 in an RNA-dependent manner. Interacts with ZFP36L1. Interacts with TRIM71 (via NHL repeats) in an RNA-dependent manner. Interacts with YTHDC2 (via ANK repeats). Interacts with DHX34; the interaction is RNA-independent. Expressed in heart, brain, pancreas, spleen, testis, osteogenic sarcoma (OGS) biopsy and primary cell lines.

It localises to the cytoplasm. Major 5'-3' exoribonuclease involved in mRNA decay. Required for the 5'-3'-processing of the G4 tetraplex-containing DNA and RNA substrates. The kinetic of hydrolysis is faster for G4 RNA tetraplex than for G4 DNA tetraplex and monomeric RNA tetraplex. Binds to RNA and DNA. Plays a role in replication-dependent histone mRNA degradation. May act as a tumor suppressor protein in osteogenic sarcoma (OGS). The chain is 5'-3' exoribonuclease 1 from Homo sapiens (Human).